Consider the following 676-residue polypeptide: Envelope glycoprotein (676 aa).

The N-terminal stretch at 1–32 is a signal peptide; that stretch reads MGVTGILQLPRDRFKRTSFFLWVIILFQRTFS. At 33–650 the chain is on the extracellular side; the sequence is IPLGVIHNST…NDNWWTGWRQ (618 aa). An N-linked (GlcNAc...) asparagine; by host glycan is attached at Asn-40. Intrachain disulfides connect Cys-53-Cys-609, Cys-108-Cys-135, Cys-121-Cys-147, Cys-511-Cys-556, and Cys-601-Cys-608. A receptor-binding region spans residues 54 to 201; that stretch reads RDKLSSTNQL…DFFSSHPLRE (148 aa). N-linked (GlcNAc...) asparagine; by host glycosylation is found at Asn-204, Asn-228, Asn-238, Asn-257, Asn-268, Asn-296, Asn-317, Asn-333, Asn-346, Asn-386, and Asn-413. Residues 305-485 are mucin-like region; that stretch reads ELSFTAVSNR…SGKLGLITNT (181 aa). Polar residues predominate over residues 314-335; it reads RAKNISGQSPARTSSDPGTNTT. The disordered stretch occupies residues 314–337; the sequence is RAKNISGQSPARTSSDPGTNTTTE. A disordered region spans residues 370 to 478; sequence TISTSPQPPT…TGEESASSGK (109 aa). Positions 414–427 are enriched in low complexity; sequence DSTASDTPPATTAA. N-linked (GlcNAc...) asparagine; by host glycosylation is found at Asn-436, Asn-454, and Asn-462. Positions 447-464 are enriched in polar residues; sequence ATTTSPQNHSETAGNNNT. Residues 524–539 are fusion peptide; sequence GAAIGLAWIPYFGPAA. Residues 554–595 adopt a coiled-coil conformation; it reads LICGLRQLANETTQALQLFLRATTELRTFSILNRKAIDFLLQ. Asn-563 is a glycosylation site (N-linked (GlcNAc...) asparagine; by host). A coiled-coil region spans residues 615 to 634; it reads WTKNITDKIDQIIHDFVDKT. An N-linked (GlcNAc...) asparagine; by host glycan is attached at Asn-618. The helical transmembrane segment at 651 to 671 threads the bilayer; the sequence is WIPAGIGVTGVIIAVIALFCI. Residues Cys-670 and Cys-672 are each lipidated (S-palmitoyl cysteine; by host). The Cytoplasmic portion of the chain corresponds to 672-676; the sequence is CKFVF.

This sequence belongs to the filoviruses glycoprotein family. In terms of assembly, homotrimer; each monomer consists of a GP1 and a GP2 subunit linked by disulfide bonds. The resulting peplomers (GP1,2) protrude from the virus surface as spikes. Interacts with host integrin alpha-V/ITGAV. Interacts with host CLEC10A. Binds also to host CD209 and CLEC4M/DC-SIGN(R). Interacts with host FOLR1. Interacts with BST2; this interaction inhibits the antiviral effect of BST2 and this allows viral release from infected cells. Interacts with host FCN1; this interaction enhances viral entry. Interacts with host TLR4; this interaction induces cell death in T-lymphocytes or proinflammatory cytokines and SOCS1 production in monocytes. Interacts with host entry receptor NPC1. As to quaternary structure, GP1 and GP2delta are part of GP1,2delta soluble complexes released by ectodomain shedding. The signal peptide region modulates GP's high mannose glycosylation, thereby determining the efficiency of the interactions with DC-SIGN(R). In terms of processing, N-glycosylated. Post-translationally, O-glycosylated in the mucin-like region. Palmitoylation of GP2 is not required for its function. In terms of processing, specific enzymatic cleavages in vivo yield mature proteins. The precursor is processed into GP1 and GP2 by host cell furin in the trans Golgi, and maybe by other host proteases, to yield the mature GP1 and GP2 proteins. The cleavage site corresponds to the furin optimal cleavage sequence [KR]-X-[KR]-R. This cleavage does not seem to be required for function. After the internalization of the virus into cell endosomes, GP1 C-terminus is removed by the endosomal proteases cathepsin B, cathepsin L, or both, leaving a 19-kDa N-terminal fragment which is further digested by cathepsin B. Proteolytic processing of GP1,2 by host ADAM17 can remove the transmembrane anchor of GP2 and leads to shedding of complexes consisting in GP1 and truncated GP2 (GP1,2delta).

It is found in the virion membrane. The protein localises to the host cell membrane. Its subcellular location is the secreted. Functionally, trimeric GP1,2 complexes form the virion surface spikes and mediate the viral entry processes, with GP1 acting as the receptor-binding subunit and GP2 as the membrane fusion subunit. At later times of infection, down-regulates the expression of various host cell surface molecules that are essential for immune surveillance and cell adhesion. Down-modulates several integrins including ITGA1, ITGA2, ITGA3, ITGA4, ITGA5, ITGA6, ITGAV and ITGB1. This decrease in cell adhesion molecules may lead to cell detachment, contributing to the disruption of blood vessel integrity and hemorrhages developed during infection (cytotoxicity). Interacts with host TLR4 and thereby stimulates the differentiation and activation of monocytes leading to bystander death of T-lymphocytes. Down-regulates as well the function of host natural killer cells. Counteracts the antiviral effect of host BST2/tetherin that restricts release of progeny virions from infected cells. However, cooperates with VP40 and host BST2 to activate canonical NF-kappa-B pathway in a manner dependent on neddylation. Functions as a decoy for anti-GP1,2 antibodies thereby contributing to viral immune evasion. Interacts and activates host macrophages and dendritic cells inducing up-regulation of cytokine transcription. This effect is mediated throught activation of host TLR4. In terms of biological role, responsible for binding to the receptor(s) on target cells. Interacts with CD209/DC-SIGN and CLEC4M/DC-SIGNR which act as cofactors for virus entry into dendritic cells (DCs) and endothelial cells. Binding to the macrophage specific lectin CLEC10A also seems to enhance virus infectivity. Interaction with FOLR1/folate receptor alpha may be a cofactor for virus entry in some cell types, although results are contradictory. Members of the Tyro3 receptor tyrosine kinase family also seem to be cell entry factors in filovirus infection. Once attached, the virions are internalized through clathrin-dependent endocytosis and/or macropinocytosis. After internalization of the virus into the endosomes of the host cell, proteolysis of GP1 by two cysteine proteases, CTSB/cathepsin B and CTSL/cathepsin L removes the glycan cap and allows GP1 binding to the host entry receptor NPC1. NPC1-binding, Ca(2+) and acidic pH induce a conformational change of GP2, which unmasks its fusion peptide and permit membranes fusion. Its function is as follows. Acts as a class I viral fusion protein. Under the current model, the protein has at least 3 conformational states: pre-fusion native state, pre-hairpin intermediate state, and post-fusion hairpin state. During viral and target cell membrane fusion, the coiled coil regions (heptad repeats) assume a trimer-of-hairpins structure, positioning the fusion peptide in close proximity to the C-terminal region of the ectodomain. The formation of this structure appears to drive apposition and subsequent fusion of viral and target cell membranes. Responsible for penetration of the virus into the cell cytoplasm by mediating the fusion of the membrane of the endocytosed virus particle with the endosomal membrane. Low pH in endosomes induces an irreversible conformational change in GP2, releasing the fusion hydrophobic peptide. The sequence is that of Envelope glycoprotein (GP) from Zaire ebolavirus (strain Kikwit-95) (ZEBOV).